We begin with the raw amino-acid sequence, 406 residues long: Vacuole membrane protein 1 (406 aa).

Over residues 1 to 20 (MAENGKNCDQRRVAMNKEQH) the composition is skewed to basic and acidic residues. A disordered region spans residues 1 to 36 (MAENGKNCDQRRVAMNKEQHNGNFTDPSSVNEKKRR). At A2 the chain carries N-acetylalanine. Residues 2–43 (AENGKNCDQRRVAMNKEQHNGNFTDPSSVNEKKRREREERQN) are Cytoplasmic-facing. Positions 21-30 (NGNFTDPSSV) are enriched in polar residues. The chain crosses the membrane as a helical span at residues 44-64 (IVLWRQPLITLQYFSLEILVI). Residues 65–77 (LKEWTSKLWHRQS) are Extracellular-facing. A helical membrane pass occupies residues 78–98 (IVVSFLLLLAVLIATYYVEGA). Residues 99 to 109 (HQQYVQRIEKQ) lie on the Cytoplasmic side of the membrane. The helical transmembrane segment at 110–130 (FLLYAYWIGLGILSSVGLGTG) threads the bilayer. The Extracellular segment spans residues 131–250 (LHTFLLYLGP…ASRAKLAVQK (120 aa)). Positions 173-316 (GTEGTISLWS…FVIITFSKHI (144 aa)) are VTT domain. A helical transmembrane segment spans residues 251–271 (LVQKVGFFGILACASIPNPLF). Residues 272 to 273 (DL) lie on the Cytoplasmic side of the membrane. The helical transmembrane segment at 274–294 (AGITCGHFLVPFWTFFGATLI) threads the bilayer. At 295–305 (GKAIIKMHIQK) the chain is on the extracellular side. A helical membrane pass occupies residues 306 to 326 (IFVIITFSKHIVEQMVAFIGA). Residues 327 to 363 (VPGIGPSLQKPFQEYLEAQRQKLHHKSEMGTPQGENW) lie on the Cytoplasmic side of the membrane. Residues 364-384 (LSWMFEKLVVVMVCYFILSII) traverse the membrane as a helical segment. Residues 385-406 (NSMAQSYAKRIQQRLNSEEKTK) are Extracellular-facing.

This sequence belongs to the VMP1 family. Interacts with BECN1. Interacts with TJP1. Interacts with TP53INP2. Interacts with TMEM41B. Interacts with ATP2A2, PLN and SLN; competes with PLN and SLN to prevent them from forming an inhibitory complex with ATP2A2. Interacts with ATG2A.

Its subcellular location is the endoplasmic reticulum-Golgi intermediate compartment membrane. The protein resides in the cell membrane. It is found in the vacuole membrane. The protein localises to the endoplasmic reticulum membrane. It catalyses the reaction a 1,2-diacyl-sn-glycero-3-phospho-L-serine(in) = a 1,2-diacyl-sn-glycero-3-phospho-L-serine(out). The enzyme catalyses cholesterol(in) = cholesterol(out). The catalysed reaction is a 1,2-diacyl-sn-glycero-3-phosphocholine(in) = a 1,2-diacyl-sn-glycero-3-phosphocholine(out). It carries out the reaction a 1,2-diacyl-sn-glycero-3-phosphoethanolamine(in) = a 1,2-diacyl-sn-glycero-3-phosphoethanolamine(out). Phospholipid scramblase involved in lipid homeostasis and membrane dynamics processes. Has phospholipid scramblase activity toward cholesterol and phosphatidylserine, as well as phosphatidylethanolamine and phosphatidylcholine. Required for autophagosome formation: participates in early stages of autophagosome biogenesis at the endoplasmic reticulum (ER) membrane by reequilibrating the leaflets of the ER as lipids are extracted by ATG2 (ATG2A or ATG2B) to mediate autophagosome assembly. Regulates ATP2A2 activity to control ER-isolation membrane contacts for autophagosome formation. In addition to autophagy, involved in other processes in which phospholipid scramblase activity is required. Modulates ER contacts with lipid droplets, mitochondria and endosomes. Plays an essential role in formation of cell junctions. Upon stress such as bacterial and viral infection, promotes formation of cytoplasmic vacuoles followed by cell death. Involved in the cytoplasmic vacuolization of acinar cells during the early stage of acute pancreatitis. The chain is Vacuole membrane protein 1 from Pongo abelii (Sumatran orangutan).